The primary structure comprises 216 residues: Ribonuclease T (216 aa).

An Exonuclease domain is found at 28-202 (VVVDVETGGF…YDTEQTARLF (175 aa)). Residues aspartate 31, glutamate 33, histidine 189, and aspartate 194 each coordinate Mg(2+). Histidine 189 acts as the Proton donor/acceptor in catalysis.

This sequence belongs to the RNase T family. Homodimer. Requires Mg(2+) as cofactor.

In terms of biological role, trims short 3' overhangs of a variety of RNA species, leaving a one or two nucleotide 3' overhang. Responsible for the end-turnover of tRNA: specifically removes the terminal AMP residue from uncharged tRNA (tRNA-C-C-A). Also appears to be involved in tRNA biosynthesis. This chain is Ribonuclease T, found in Xanthomonas campestris pv. campestris (strain 8004).